The following is a 398-amino-acid chain: S-adenosylmethionine synthase (398 aa).

Position 26 (His-26) interacts with ATP. Residue Asp-28 participates in Mg(2+) binding. K(+) is bound at residue Glu-54. L-methionine contacts are provided by Glu-67 and Gln-110. Positions 110-120 are flexible loop; the sequence is QSPDIAQGVNE. Residues 177-179, 243-244, Asp-252, 258-259, Ala-275, and Lys-279 each bind ATP; these read DAK, RF, and RK. L-methionine is bound at residue Asp-252. Lys-283 contacts L-methionine.

This sequence belongs to the AdoMet synthase family. As to quaternary structure, homotetramer; dimer of dimers. Requires Mg(2+) as cofactor. K(+) serves as cofactor.

The protein resides in the cytoplasm. The enzyme catalyses L-methionine + ATP + H2O = S-adenosyl-L-methionine + phosphate + diphosphate. It participates in amino-acid biosynthesis; S-adenosyl-L-methionine biosynthesis; S-adenosyl-L-methionine from L-methionine: step 1/1. Catalyzes the formation of S-adenosylmethionine (AdoMet) from methionine and ATP. The overall synthetic reaction is composed of two sequential steps, AdoMet formation and the subsequent tripolyphosphate hydrolysis which occurs prior to release of AdoMet from the enzyme. This Desulfotalea psychrophila (strain LSv54 / DSM 12343) protein is S-adenosylmethionine synthase.